The primary structure comprises 417 residues: 3-oxoacyl-[acyl-carrier-protein] synthase 2 (417 aa).

The 407-residue stretch at 10–416 (FPYVVVTGIA…GHNVAIAFGR (407 aa)) folds into the Ketosynthase family 3 (KS3) domain. Catalysis depends on for beta-ketoacyl synthase activity residues Cys-170, His-311, and His-346.

The protein belongs to the thiolase-like superfamily. Beta-ketoacyl-ACP synthases family.

Its subcellular location is the cytoplasm. The catalysed reaction is an ultra-long-chain di-unsaturated fatty acyl-[ACP] + malonyl-[ACP] + H(+) = a 3-oxo-ultra-long-chain di-unsaturated fatty acyl-[ACP] + holo-[ACP] + CO2. It participates in lipid metabolism; mycolic acid biosynthesis. In terms of biological role, part of the mycobacterial fatty acid elongation system FAS-II, which is involved in mycolic acid biosynthesis. Catalyzes the elongation of long chain acyl-ACP substrates by the addition of two carbons from malonyl-ACP to an acyl acceptor. Involved in extension of the mycolate chains to full lengths and produces longer chain multiunsaturated hydrocarbons averaging 54 carbons in length. The protein is 3-oxoacyl-[acyl-carrier-protein] synthase 2 (kasB) of Mycobacterium bovis (strain ATCC BAA-935 / AF2122/97).